A 173-amino-acid polypeptide reads, in one-letter code: dCTP deaminase, dUMP-forming (173 aa).

Residues 93–98 (RSSIGR), D111, 119–121 (TLE), Q138, and Y151 contribute to the dCTP site. Catalysis depends on E121, which acts as the Proton donor/acceptor.

It belongs to the dCTP deaminase family. As to quaternary structure, homotrimer.

The enzyme catalyses dCTP + 2 H2O = dUMP + NH4(+) + diphosphate. Its pathway is pyrimidine metabolism; dUMP biosynthesis; dUMP from dCTP: step 1/1. Its function is as follows. Bifunctional enzyme that catalyzes both the deamination of dCTP to dUTP and the hydrolysis of dUTP to dUMP without releasing the toxic dUTP intermediate. The chain is dCTP deaminase, dUMP-forming from Clostridium acetobutylicum (strain ATCC 824 / DSM 792 / JCM 1419 / IAM 19013 / LMG 5710 / NBRC 13948 / NRRL B-527 / VKM B-1787 / 2291 / W).